A 213-amino-acid chain; its full sequence is PRA1 family protein B2 (213 aa).

Residues 1-21 (MSSSPAILPVTNQQAATQSQP) are disordered. The next 5 helical transmembrane spans lie at 75-94 (LAYF…AFSL), 98-117 (PFSL…LYLF), 137-157 (LLGL…GSLL), 161-181 (LTIG…DDLF), and 190-210 (AGLL…SVVA).

This sequence belongs to the PRA1 family. Interacts with PRA1B1, PRA1B3, PRA1B4, PRA1B5, PRA1B6 and PRA1E.

It is found in the endosome membrane. May be involved in both secretory and endocytic intracellular trafficking in the endosomal/prevacuolar compartments. The chain is PRA1 family protein B2 (PRA1B2) from Arabidopsis thaliana (Mouse-ear cress).